A 90-amino-acid chain; its full sequence is Mucin-like protein 1 (90 aa).

Positions 1-20 are cleaved as a signal peptide; the sequence is MKFLAVLVLLGVSIFLVSAQ. Threonine 23, threonine 24, threonine 30, threonine 34, threonine 46, threonine 47, threonine 51, threonine 52, threonine 54, threonine 55, threonine 59, threonine 60, threonine 62, and threonine 63 each carry an O-linked (GalNAc...) threonine glycan. 2 stretches are compositionally biased toward low complexity: residues 25-36 and 44-68; these read AAPADTYPATGP and AETT…ASTT. Residues 25–68 are disordered; the sequence is AAPADTYPATGPADDEAPDAETTAAATTATTAAPTTATTAASTT. 3 repeat units span residues 46–53, 54–61, and 62–69. The tract at residues 46-69 is 3 X 8 AA tandem repeat of T-T-A-A-[APS]-T-T-A; sequence TTAAATTATTAAPTTATTAASTTA. Residue serine 66 is glycosylated (O-linked (GalNAc...) serine). Threonine 67 and threonine 68 each carry an O-linked (GalNAc...) threonine glycan.

In terms of processing, O-glycosylated. Expressed in mammary, salivary glands and prostate. Also detected in lung. Mainly expressed in cancer cell lines of breast origin. Highly expressed in lymph node-positive compared with node-negative tumors. Detected in all lymph node containing metastatic cells.

It localises to the secreted. The protein resides in the membrane. Functionally, may play a role as marker for the diagnosis of metastatic breast cancer. This is Mucin-like protein 1 (MUCL1) from Homo sapiens (Human).